The chain runs to 352 residues: Peptide chain release factor 1 (352 aa).

N5-methylglutamine is present on Gln-233. Positions 288-309 are disordered; sequence NAKDRKEQVGSGDRSERIRTYN. The span at 289–306 shows a compositional bias: basic and acidic residues; sequence AKDRKEQVGSGDRSERIR.

Belongs to the prokaryotic/mitochondrial release factor family. In terms of processing, methylated by PrmC. Methylation increases the termination efficiency of RF1.

The protein resides in the cytoplasm. Its function is as follows. Peptide chain release factor 1 directs the termination of translation in response to the peptide chain termination codons UAG and UAA. The chain is Peptide chain release factor 1 from Helicobacter pylori (strain Shi470).